The sequence spans 600 residues: DNA mismatch repair protein MutL (600 aa).

Residues 348–375 are disordered; it reads QPQAQRPQTAWSAETSPFRPYQPTTGFS. Positions 349 to 362 are enriched in polar residues; it reads PQAQRPQTAWSAET.

Belongs to the DNA mismatch repair MutL/HexB family.

Functionally, this protein is involved in the repair of mismatches in DNA. It is required for dam-dependent methyl-directed DNA mismatch repair. May act as a 'molecular matchmaker', a protein that promotes the formation of a stable complex between two or more DNA-binding proteins in an ATP-dependent manner without itself being part of a final effector complex. The protein is DNA mismatch repair protein MutL of Rhizobium leguminosarum bv. trifolii (strain WSM2304).